A 333-amino-acid polypeptide reads, in one-letter code: MQQYSSKYNKQAILLVNLGTPDNYDTKSIKRYLKEFLSDPRVIEANPILWKIILNLIILPIRAKKNIHTYKTVWNKQHNKSPLLFYTENLADKLDKKLDNYIVDYAMRYGNPSIESKIKSLQDQGATEIIIFPLYPQYSATTTATVYDEVYRVLSKLRWQPTIKGINPYYDNKFHIQTISQQIKEHLKKLDSTPDTVLFSFHGLPKEYFDKGDPYYCHCYKTYRLVKEELQNEYPNIDFELSFQSRFGPKKWLEPYTTVKLEEFAKQNKSVVIIAPGFSADCLETLEELAISEKENFIKKGGKEFSLIPCLNDSNQHVDMLYNIIDEEICLKK.

Residues histidine 202 and glutamate 284 each coordinate Fe cation.

It belongs to the ferrochelatase family.

The protein localises to the cytoplasm. The catalysed reaction is heme b + 2 H(+) = protoporphyrin IX + Fe(2+). It functions in the pathway porphyrin-containing compound metabolism; protoheme biosynthesis; protoheme from protoporphyrin-IX: step 1/1. Catalyzes the ferrous insertion into protoporphyrin IX. This Francisella tularensis subsp. holarctica (strain LVS) protein is Ferrochelatase.